The primary structure comprises 596 residues: Arginine--tRNA ligase (596 aa).

Residues 139–149 (ANPTGPLHVGH) carry the 'HIGH' region motif.

The protein belongs to the class-I aminoacyl-tRNA synthetase family. In terms of assembly, monomer.

Its subcellular location is the cytoplasm. It carries out the reaction tRNA(Arg) + L-arginine + ATP = L-arginyl-tRNA(Arg) + AMP + diphosphate. This Paraburkholderia phytofirmans (strain DSM 17436 / LMG 22146 / PsJN) (Burkholderia phytofirmans) protein is Arginine--tRNA ligase.